Reading from the N-terminus, the 875-residue chain is Outer membrane usher protein FocD (875 aa).

Residues 1-38 (MFFGDGGQLLSDKSLTGSAGGGNNRMKFNILPLAFFIG) form the signal peptide. The cysteines at positions 852 and 874 are disulfide-linked.

The protein belongs to the fimbrial export usher family.

It localises to the cell outer membrane. Functionally, involved in the export and assembly of the F1C fimbriae subunits across the outer membrane. The polypeptide is Outer membrane usher protein FocD (focD) (Escherichia coli).